Reading from the N-terminus, the 241-residue chain is Sugar fermentation stimulation protein homolog (241 aa).

It belongs to the SfsA family.

The protein is Sugar fermentation stimulation protein homolog of Jannaschia sp. (strain CCS1).